A 512-amino-acid polypeptide reads, in one-letter code: GMP synthase [glutamine-hydrolyzing] (512 aa).

The 191-residue stretch at 7–197 (TIIVLDFGSQ…VFGVCGCSEG (191 aa)) folds into the Glutamine amidotransferase type-1 domain. Residue Cys-84 is the Nucleophile of the active site. Catalysis depends on residues His-171 and Glu-173. One can recognise a GMPS ATP-PPase domain in the interval 198–387 (WNMENFIEVE…LGIPDEIVWR (190 aa)). Residue 225–231 (SGGVDSS) participates in ATP binding.

Homodimer.

It catalyses the reaction XMP + L-glutamine + ATP + H2O = GMP + L-glutamate + AMP + diphosphate + 2 H(+). Its pathway is purine metabolism; GMP biosynthesis; GMP from XMP (L-Gln route): step 1/1. In terms of biological role, catalyzes the synthesis of GMP from XMP. The protein is GMP synthase [glutamine-hydrolyzing] of Bacillus cytotoxicus (strain DSM 22905 / CIP 110041 / 391-98 / NVH 391-98).